Reading from the N-terminus, the 413-residue chain is Methylaspartate ammonia-lyase (413 aa).

Gln-172 is a (2S,3S)-3-methyl-L-aspartate binding site. 3 residues coordinate Mg(2+): Asp-238, Glu-273, and Asp-307. Gln-329 lines the (2S,3S)-3-methyl-L-aspartate pocket. The Proton acceptor role is filled by Lys-331. Residue 360–361 (TC) coordinates (2S,3S)-3-methyl-L-aspartate.

The protein belongs to the methylaspartate ammonia-lyase family. As to quaternary structure, homodimer. Mg(2+) serves as cofactor.

The enzyme catalyses (2S,3S)-3-methyl-L-aspartate = mesaconate + NH4(+). Its pathway is amino-acid degradation; L-glutamate degradation via mesaconate pathway; acetate and pyruvate from L-glutamate: step 2/4. In terms of biological role, involved in the methylaspartate cycle. Catalyzes the formation of the alpha,beta-unsaturated bond by the reversible anti elimination of ammonia from L-threo-beta-methylaspartate (L-threo-(2S,3S)-3-methylaspartate) to give mesaconate. This is Methylaspartate ammonia-lyase from Citrobacter amalonaticus.